We begin with the raw amino-acid sequence, 487 residues long: Probable cytochrome P450 313a5 (487 aa).

Position 223 is a phosphotyrosine (Y223). Position 433 (C433) interacts with heme.

Belongs to the cytochrome P450 family. Heme is required as a cofactor.

It is found in the endoplasmic reticulum membrane. It localises to the microsome membrane. In terms of biological role, may be involved in the metabolism of insect hormones and in the breakdown of synthetic insecticides. This is Probable cytochrome P450 313a5 (Cyp313a5) from Drosophila melanogaster (Fruit fly).